Consider the following 262-residue polypeptide: Caffeyl-CoA reductase-Etf complex subunit CarD (262 aa).

This sequence belongs to the ETF beta-subunit/FixA family. Part of the homotrimeric caffeyl-CoA reductase-Etf complex composed of (R)-2-hydroxyisocaproyl-CoA dehydratase CarC, and the electron transfer flavoprotein (ETF) alpha (CarE) and beta (CarD) subunits. The cofactor is FAD. AMP serves as cofactor.

Its subcellular location is the cytoplasm. It catalyses the reaction hydrocaffeoyl-CoA + 2 reduced [2Fe-2S]-[ferredoxin] + 2 NAD(+) = (E)-caffeoyl-CoA + 2 oxidized [2Fe-2S]-[ferredoxin] + 2 NADH. Functionally, caffeyl-CoA reductase-Etf complex catalyzes the reduction of caffeyl-CoA to yield hydrocaffeyl-CoA. It couples the endergonic ferredoxin reduction with NADH as reductant to the exergonic reduction of caffeoyl-CoA with the same reductant. It uses the mechanism of electron bifurcation to overcome the steep energy barrier in ferredoxin reduction. The electron transfer flavoprotein (Etf) mediates the electron transfer between the different donors and acceptors. The complex can also reduce 4-coumaroyl-CoA and feruloyl-CoA. The chain is Caffeyl-CoA reductase-Etf complex subunit CarD from Acetobacterium woodii (strain ATCC 29683 / DSM 1030 / JCM 2381 / KCTC 1655 / WB1).